The following is a 269-amino-acid chain: Sororin (269 aa).

3 disordered regions span residues 1-39, 56-110, and 146-169; these read MSEGKKRSRGGLAIISPPKRRSQRKSTSDSPIPEPIMKR, VNTG…PKIN, and SLNSSSSLYSPTRKTDSSDTSTPN. Residues 57 to 66 are compositionally biased toward polar residues; it reads NTGSQSTPKV. The short motif at 85-87 is the KEN box element; sequence KEN. Residues 146-155 are compositionally biased toward low complexity; sequence SLNSSSSLYS. The FGF motif signature appears at 180–182; that stretch reads FGF. The segment at 247–269 is C-terminal Sororin domain; sequence LDEWAAFMNAEFEEAEKFDLTVE.

Belongs to the sororin family. Interacts with the APC/C complex. Interacts with the chromatin-bound cohesin complex; the interaction is indirect, occurs after DNA replication and requires acetylation of the cohesin component smc3. Interacts (via the FGF motif) with pds5a and pds5b; the interaction is direct and prevents the interaction of pds5a with wapl. Post-translationally, ubiquitinated by the APC/C complex in G1, leading to its degradation.

Its subcellular location is the nucleus. It localises to the chromosome. The protein resides in the cytoplasm. In terms of biological role, regulator of sister chromatid cohesion in mitosis stabilizing cohesin complex association with chromatin. May antagonize the action of wapl which stimulates cohesin dissociation from chromatin. Cohesion ensures that chromosome partitioning is accurate in both meiotic and mitotic cells and plays an important role in DNA repair. Required for efficient DNA double-stranded break repair. The chain is Sororin (cdca5-a) from Xenopus laevis (African clawed frog).